Consider the following 419-residue polypeptide: 3-oxo-isoapionate-4-phosphate decarboxylase (419 aa).

Mg(2+) contacts are provided by Lys179, Asp181, and Glu182. Lys179 bears the N6-carboxylysine mark.

It belongs to the RuBisCO large chain family. It depends on Mg(2+) as a cofactor.

The enzyme catalyses 3-oxoisoapionate 4-phosphate + H(+) = L-erythrulose 1-phosphate + CO2. It participates in carbohydrate metabolism. Functionally, involved in catabolism of D-apiose. Catalyzes the decarboxylation of 3-oxo-isoapionate 4-phosphate to L-erythrulose 1-phosphate. The polypeptide is 3-oxo-isoapionate-4-phosphate decarboxylase (Rhizobium rhizogenes (strain K84 / ATCC BAA-868) (Agrobacterium radiobacter)).